A 608-amino-acid chain; its full sequence is RAS guanyl-releasing protein 2 (608 aa).

Positions 4–126 (TLDLDKGCTV…SLIDIENVPT (123 aa)) constitute an N-terminal Ras-GEF domain. 3 positions are modified to phosphoserine: Ser116, Ser117, and Ser147. Positions 154–387 (EPLELAAHLT…YQLSLQREPR (234 aa)) constitute a Ras-GEF domain. Residues 382 to 407 (LQREPRSKSSPTSPTTCTPPPRPPVL) are disordered. EF-hand domains lie at 426–461 (HIEK…FPYL) and 463–490 (AFGD…SSSM). Ca(2+) contacts are provided by Asp439, Asp441, Asp443, His445, Glu450, Asp468, Asn470, Asp472, Cys474, and Glu479. The segment at 498–548 (VHNFHESNSLRPVACRHCKALILGIYKQGLKCRACGVNCHKQCKDRLSVEC) adopts a Phorbol-ester/DAG-type zinc-finger fold. Phosphoserine is present on residues Ser554 and Ser575. Positions 556-591 (SLEGSAPSPSPTHTHHRAFSFSLPRPGRRGSRPPEI) are disordered.

Belongs to the RASGRP family. As to quaternary structure, forms a signaling complex with RAP1 and BRAF. Interacts with RAP1. Interacts with F-actin.

It localises to the cytoplasm. The protein resides in the cytosol. Its subcellular location is the cell membrane. The protein localises to the synapse. It is found in the synaptosome. It localises to the cell projection. The protein resides in the ruffle membrane. Its function is as follows. Functions as a calcium- and DAG-regulated nucleotide exchange factor specifically activating Rap through the exchange of bound GDP for GTP. May also activate other GTPases such as RRAS, RRAS2, NRAS, KRAS but not HRAS. Functions in aggregation of platelets and adhesion of T-lymphocytes and neutrophils probably through inside-out integrin activation. May function in the muscarinic acetylcholine receptor M1/CHRM1 signaling pathway. The chain is RAS guanyl-releasing protein 2 (RASGRP2) from Bos taurus (Bovine).